Consider the following 157-residue polypeptide: MKLHELSDNPGATKKRKRVGRGPGSGTGKMGGRGIKGQKSRSGVAINAYEGGQMPLYQRLPKRGFNKPNRKKFAVVNLGLIQKFIDAGKLDGKADITEDALVASGLVRRKLDGVRVLAKGDVSGKLNITVTGASKAAIDAVSAAGGALTVSAPAAAE.

The segment at 1-41 (MKLHELSDNPGATKKRKRVGRGPGSGTGKMGGRGIKGQKSR) is disordered. Over residues 21–35 (RGPGSGTGKMGGRGI) the composition is skewed to gly residues.

This sequence belongs to the universal ribosomal protein uL15 family. Part of the 50S ribosomal subunit.

Functionally, binds to the 23S rRNA. The chain is Large ribosomal subunit protein uL15 from Jannaschia sp. (strain CCS1).